An 890-amino-acid polypeptide reads, in one-letter code: Chloroquine resistance transporter (890 aa).

Disordered regions lie at residues M1 to L163 and G280 to G300. Topologically, residues M1–A349 are cytoplasmic. Positions S8–K19 are enriched in basic residues. Composition is skewed to low complexity over residues A102–S126 and S134–S156. Residues A350–F372 traverse the membrane as a helical segment. Residues K373–T391 lie on the Vacuolar side of the membrane. The chain crosses the membrane as a helical span at residues V392–P412. Residues Q413–N422 are Cytoplasmic-facing. A helical membrane pass occupies residues F423 to H443. At T444–T447 the chain is on the vacuolar side. The chain crosses the membrane as a helical span at residues T448–L468. The Cytoplasmic portion of the chain corresponds to R469–R471. Residues F472 to L492 traverse the membrane as a helical segment. Residues P493 to D505 lie on the Vacuolar side of the membrane. Residues V506–Y526 form a helical membrane-spanning segment. The Cytoplasmic portion of the chain corresponds to K527 to W544. Residues V545–L565 form a helical membrane-spanning segment. Over G566–K614 the chain is Vacuolar. N581 carries N-linked (GlcNAc...) asparagine glycosylation. 2 disulfides stabilise this stretch: C585-C609 and C596-C606. The chain crosses the membrane as a helical span at residues Y615–V634. The Cytoplasmic portion of the chain corresponds to K635–A640. Residues L641–M663 form a helical membrane-spanning segment. Residues G664–T673 are Vacuolar-facing. Residues D674–M694 form a helical membrane-spanning segment. The Cytoplasmic segment spans residues K695 to I890. Positions A798–S871 are disordered.

The protein belongs to the CRT-like transporter family.

Its subcellular location is the vacuole membrane. In terms of biological role, nutrient transporter. Involved in maintaining the osmotic homeostasis of the digestive vacuole. Required for the proper organization of the endolysosomal system and, in turn, indirectly for microneme secretion and parasite invasion. Required for bradyzoite viability and cyst development. The sequence is that of Chloroquine resistance transporter from Toxoplasma gondii.